Here is a 544-residue protein sequence, read N- to C-terminus: Bacillolysin (544 aa).

The first 25 residues, 1-25 (MNKRAMLGAIGLAFGLMAWPFGASA), serve as a signal peptide directing secretion. Positions 26–225 (KGKSMVWNEQ…DEAKPGGAQP (200 aa)) are cleaved as a propeptide — activation peptide. Residues D285, D287, Q289, and D366 each contribute to the Ca(2+) site. Zn(2+) is bound at residue H370. The active site involves E371. H374 and E394 together coordinate Zn(2+). E405, N411, D413, E415, E418, Y421, T422, V425, and D428 together coordinate Ca(2+). H459 serves as the catalytic Proton donor.

It belongs to the peptidase M4 family. The cofactor is Ca(2+). Zn(2+) is required as a cofactor.

It localises to the secreted. It catalyses the reaction Similar, but not identical, to that of thermolysin.. Extracellular zinc metalloprotease. This is Bacillolysin (npr) from Bacillus caldolyticus.